The sequence spans 242 residues: MLTALVIDDEPFAREELTDLLSETGDIDVIGDAANAIVGLKKINELKPDVVFLDIQMPQVTGIELLGMMDPDTMPYVVFVTAYDQYAIQAFEDNAFDYLLKPVDPERLRKTVKRLSKAASHSALSQHIASLAPETLDQIPCIGHNRIVIMATESVECAYSDISGVHVRSASQTASTQLTLKVLEEKTSLVRCHRQYLISIKAISEIKLLENGLAEIITKTGFEVPVSRRYLKLLKEMLGLSH.

Positions 3-116 constitute a Response regulatory domain; it reads TALVIDDEPF…RLRKTVKRLS (114 aa). Position 54 is a 4-aspartylphosphate (Asp-54). Positions 139–240 constitute an HTH LytTR-type domain; it reads IPCIGHNRIV…LKLLKEMLGL (102 aa).

This is an uncharacterized protein from Vibrio vulnificus (strain CMCP6).